The sequence spans 374 residues: Zinc finger CCCH domain-containing protein 15 homolog (374 aa).

A disordered region spans residues 1 to 20; the sequence is MPPKQQGPSKKSEQKRKEKV. The span at 10–20 shows a compositional bias: basic and acidic residues; the sequence is KKSEQKRKEKV. C3H1-type zinc fingers lie at residues 90 to 117 and 166 to 199; these read DPKSLLCVFFKQGLCGKGAKCKFSHDLA and VCKYFLEAVENNKYGWFWECPNGGEKCQYRHCLP.

The protein belongs to the ZC3H15/TMA46 family.

The polypeptide is Zinc finger CCCH domain-containing protein 15 homolog (Caenorhabditis elegans).